We begin with the raw amino-acid sequence, 219 residues long: Histone H1.11R (219 aa).

Composition is skewed to low complexity over residues 1–20 (MAETAPAAAPAAAPAPAAKA) and 28–40 (AAGGAKARKPAGP). 2 disordered regions span residues 1–42 (MAET…GPSV) and 89–219 (LVSK…AKKK). The H15 domain maps to 38–111 (AGPSVTELIT…GASGSFRLSK (74 aa)). 4 stretches are compositionally biased toward basic residues: residues 121–135 (PKKKASAAKPKKAAA), 143–160 (KKPKKAVAVKKSPKKAKK), 168–183 (KSVKSPKKAAKPKKAV), and 192–219 (KAVKPKAAKPKAAKPKAAKAKKAAAKKK).

It belongs to the histone H1/H5 family.

The protein localises to the nucleus. Its subcellular location is the chromosome. Its function is as follows. Histones H1 are necessary for the condensation of nucleosome chains into higher-order structures. This chain is Histone H1.11R, found in Gallus gallus (Chicken).